The following is a 1772-amino-acid chain: Merozoite surface protein 1 (1772 aa).

The N-terminal stretch at 1-18 (MKVIGLLFSFVFFAIKCK) is a signal peptide. N54 is a glycosylation site (N-linked (GlcNAc...) asparagine). A disordered region spans residues 290–319 (TGGQSSTEPGSGGSSASGTSSSGQASAGTG). A compositionally biased stretch (low complexity) spans 305-319 (ASGTSSSGQASAGTG). N-linked (GlcNAc...) asparagine glycosylation is found at N406 and N646. Residues 703–796 (KERMEQGPAI…QPSQAASSTT (94 aa)) are disordered. A compositionally biased stretch (low complexity) spans 724–796 (SAESSTDRST…QPSQAASSTT (73 aa)). N-linked (GlcNAc...) asparagine glycosylation is present at N829. The interval 924-1070 (AAPTPVTPAA…SRAESEEDMP (147 aa)) is disordered. 2 stretches are compositionally biased toward low complexity: residues 930–946 (TPAATEQQQQQATPDVQ) and 956–1052 (SQQP…NSQS). N-linked (GlcNAc...) asparagine glycosylation is found at N1018 and N1090. The segment at 1362 to 1383 (GAVPGSGTDTRVAGSSVDDNED) is disordered. N-linked (GlcNAc...) asparagine glycosylation is found at N1408, N1446, N1541, and N1629. EGF-like domains are found at residues 1661–1703 (HVCV…VENN) and 1704–1752 (NPTC…FCSS). C1663 and C1675 are joined by a disulfide. An N-linked (GlcNAc...) asparagine glycan is attached at N1680. Disulfide bonds link C1687-C1699, C1707-C1720, C1714-C1734, and C1736-C1750. S1751 carries GPI-anchor amidated serine lipidation. A propeptide spans 1752–1772 (SSSFMGLSILLIITLIVFNIF) (removed in mature form).

Forms a complex composed of subunits p83, p30, p38, and p42 which remain non-covalently associated; the complex is formed at the merozoite surface prior to egress from host erythrocytes. Post-translationally, the p230 precursor is cleaved by SUB1 prior to merozoite egress into 4 subunits p83, p30, p38, and p42 which remain non-covalently associated. In a second processing step during erythrocyte invasion, p42 is cleaved by SUB2 into p33 and p19; the latter remains attached to the merozoite surface via its GPI-anchor and stays on the surface during the subsequent ring stage.

Its subcellular location is the cell membrane. It localises to the secreted. Functionally, during the asexual blood stage, involved in merozoite egress from host erythrocytes possibly via its interaction with the host cytoskeleton protein spectrin resulting in the destabilization of the host cytoskeleton and thus leading to erythrocyte cell membrane rupture. Involved in the binding to host erythrocytes and is required for host erythrocyte invasion. The sequence is that of Merozoite surface protein 1 from Plasmodium yoelii yoelii.